The chain runs to 310 residues: Carbamate kinase 1 (310 aa).

As to quaternary structure, homodimer (predominantly) and homotetramer.

It is found in the cytoplasm. It catalyses the reaction hydrogencarbonate + NH4(+) + ATP = carbamoyl phosphate + ADP + H2O + H(+). Its pathway is metabolic intermediate metabolism; carbamoyl phosphate degradation; CO(2) and NH(3) from carbamoyl phosphate: step 1/1. Its activity is regulated as follows. Inhibited by adenosine(5')pentaphospho(5')adenosine (Ap5A), Ap6A and to a much lower extent by Ap4A. Functionally, catalyzes the reversible synthesis of carbamate and ATP from carbamoyl phosphate and ADP. Can also catalyze, although with low efficiency, the phosphorylation of bicarbonate, leading to the formation of carboxyphosphate, an unstable intermediate found in the reactions catalyzed by carbamoyl-phosphate synthase and biotin carboxylase. Can also use acetate. The chain is Carbamate kinase 1 (arcC1) from Enterococcus faecium (Streptococcus faecium).